The chain runs to 616 residues: Pheromone-processing carboxypeptidase KEX1 (616 aa).

An N-terminal signal peptide occupies residues 1–28 (MAPRFSWSFATSWHALAILALWPVSTLA). Topologically, residues 29–516 (GDKSAADYYV…NEAKWHAYQR (488 aa)) are lumenal. N-linked (GlcNAc...) asparagine glycosylation is present at N119. S183 is an active-site residue. N357 carries N-linked (GlcNAc...) asparagine glycosylation. The active site involves D382. N-linked (GlcNAc...) asparagine glycosylation is found at N433 and N441. The active site involves H444. Residues 468–504 (SIGGQPSDSRIDGEKGPDTSVGGAKNNTQQHEEETKQ) are disordered. A glycan (N-linked (GlcNAc...) asparagine) is linked at N493. Residues 517 to 537 (SGEVVLVIVIIAASVWGYFVW) traverse the membrane as a helical segment. Topologically, residues 538–616 (RQRRKGAAYS…DEEEEGTTKT (79 aa)) are cytoplasmic. Residues 577–616 (AAFDETTVDNIPLQESIGRGESKYSIGDDSDEEEEGTTKT) are disordered. Positions 604–616 (DDSDEEEEGTTKT) are enriched in acidic residues.

It belongs to the peptidase S10 family.

The protein localises to the golgi apparatus. Its subcellular location is the trans-Golgi network membrane. The enzyme catalyses Preferential release of a C-terminal arginine or lysine residue.. Functionally, protease with a carboxypeptidase B-like function involved in the C-terminal processing of the lysine and arginine residues from protein precursors. Promotes cell fusion and is involved in the programmed cell death. This is Pheromone-processing carboxypeptidase KEX1 (KEX1) from Metarhizium acridum (strain CQMa 102).